A 467-amino-acid chain; its full sequence is Glutamate--tRNA ligase (467 aa).

Positions 10–20 match the 'HIGH' region motif; the sequence is PSPTGYLHVGG. A 'KMSKS' region motif is present at residues 238–242; the sequence is RLSKR. Lys-241 lines the ATP pocket.

This sequence belongs to the class-I aminoacyl-tRNA synthetase family. Glutamate--tRNA ligase type 1 subfamily. As to quaternary structure, monomer.

It localises to the cytoplasm. It catalyses the reaction tRNA(Glu) + L-glutamate + ATP = L-glutamyl-tRNA(Glu) + AMP + diphosphate. In terms of biological role, catalyzes the attachment of glutamate to tRNA(Glu) in a two-step reaction: glutamate is first activated by ATP to form Glu-AMP and then transferred to the acceptor end of tRNA(Glu). This chain is Glutamate--tRNA ligase, found in Citrifermentans bemidjiense (strain ATCC BAA-1014 / DSM 16622 / JCM 12645 / Bem) (Geobacter bemidjiensis).